Reading from the N-terminus, the 67-residue chain is Probable Sec-independent protein translocase protein TatE (67 aa).

A helical transmembrane segment spans residues 1–21; sequence MGEISITKLLVVAALVVLLFG. A disordered region spans residues 45-67; sequence DEDAGAKKDANGDLPAEKLTHKE.

It belongs to the TatA/E family. TatE subfamily.

The protein resides in the cell inner membrane. Functionally, part of the twin-arginine translocation (Tat) system that transports large folded proteins containing a characteristic twin-arginine motif in their signal peptide across membranes. TatE shares overlapping functions with TatA. The protein is Probable Sec-independent protein translocase protein TatE of Escherichia fergusonii (strain ATCC 35469 / DSM 13698 / CCUG 18766 / IAM 14443 / JCM 21226 / LMG 7866 / NBRC 102419 / NCTC 12128 / CDC 0568-73).